The sequence spans 121 residues: Large ribosomal subunit protein bL17 (121 aa).

The protein belongs to the bacterial ribosomal protein bL17 family. As to quaternary structure, part of the 50S ribosomal subunit. Contacts protein L32.

In Sulfurihydrogenibium sp. (strain YO3AOP1), this protein is Large ribosomal subunit protein bL17.